The following is a 326-amino-acid chain: MKKIPLGTTDITLSRMGLGTWAIGGGPAWNGDLDRQICIDTILEAHRCGINLIDTAPGYNFGNSEVIVGQALKKLPREQVVVETKCGIVWERKGSLFNKVGDRQLYKNLSPESIREEVAASLQRLGIDYIDIYMTHWQSVPPFFTPIAETVAVLNELKSEGKIRAIGAANVDADHIREYLQYGELDIIQAKYSILDRAMENELLPLCRDNGIVVQVYSPLEQGLLTGTITRDYVPGGARANKVWFQRENMLKVIDMLEQWQPLCARYQCTIPTLALAWILKQSDLISILSGATAPEQVRENVAALNINLSDADATLMREMAEALER.

Residues 20 to 21 (TW) and D54 contribute to the NAD(+) site. Y59 serves as the catalytic Proton donor. NAD(+)-binding positions include Q189, 217–222 (YSPLEQ), G291, and Q297.

It belongs to the aldo/keto reductase family. Aldo/keto reductase 11 subfamily. Monomer.

The catalysed reaction is hydroxyacetone + NAD(+) = methylglyoxal + NADH + H(+). In terms of biological role, catalyzes the NADH-dependent reduction of methylglyoxal (2-oxopropanal) in vitro. It is not known if this activity has physiological significance. Cannot use NADPH as a cosubstrate. Seems to play some role in intestinal colonization. The chain is NADH-specific methylglyoxal reductase (ydjG) from Escherichia coli (strain K12).